Reading from the N-terminus, the 542-residue chain is Chaperonin GroEL (542 aa).

Residues 29-32 (TIGP), 86-90 (DGTTT), Gly413, 477-479 (NAA), and Asp493 each bind ATP.

Belongs to the chaperonin (HSP60) family. As to quaternary structure, forms a cylinder of 14 subunits composed of two heptameric rings stacked back-to-back. Interacts with the co-chaperonin GroES.

The protein localises to the cytoplasm. It catalyses the reaction ATP + H2O + a folded polypeptide = ADP + phosphate + an unfolded polypeptide.. Together with its co-chaperonin GroES, plays an essential role in assisting protein folding. The GroEL-GroES system forms a nano-cage that allows encapsulation of the non-native substrate proteins and provides a physical environment optimized to promote and accelerate protein folding. In Lactobacillus acidophilus (strain ATCC 700396 / NCK56 / N2 / NCFM), this protein is Chaperonin GroEL.